We begin with the raw amino-acid sequence, 542 residues long: CTP synthase (542 aa).

Residues 1–265 (MARYVFITGG…DSEILSAFGI (265 aa)) form an amidoligase domain region. Ser13 is a binding site for CTP. A UTP-binding site is contributed by Ser13. 14 to 19 (SLGKGI) serves as a coordination point for ATP. Tyr54 lines the L-glutamine pocket. Asp71 is an ATP binding site. Residues Asp71 and Glu139 each contribute to the Mg(2+) site. CTP-binding positions include 146–148 (DIE), 186–191 (KTKPTQ), and Lys222. UTP is bound by residues 186-191 (KTKPTQ) and Lys222. The Glutamine amidotransferase type-1 domain maps to 291 to 541 (TIAIVGKYTG…IAATVEQSRL (251 aa)). Ala353 contributes to the L-glutamine binding site. The active-site Nucleophile; for glutamine hydrolysis is Cys380. L-glutamine is bound by residues 381–384 (FGMQ), Glu404, and Arg469. Active-site residues include His514 and Glu516.

This sequence belongs to the CTP synthase family. In terms of assembly, homotetramer.

The enzyme catalyses UTP + L-glutamine + ATP + H2O = CTP + L-glutamate + ADP + phosphate + 2 H(+). The catalysed reaction is L-glutamine + H2O = L-glutamate + NH4(+). It carries out the reaction UTP + NH4(+) + ATP = CTP + ADP + phosphate + 2 H(+). It functions in the pathway pyrimidine metabolism; CTP biosynthesis via de novo pathway; CTP from UDP: step 2/2. Its activity is regulated as follows. Allosterically activated by GTP, when glutamine is the substrate; GTP has no effect on the reaction when ammonia is the substrate. The allosteric effector GTP functions by stabilizing the protein conformation that binds the tetrahedral intermediate(s) formed during glutamine hydrolysis. Inhibited by the product CTP, via allosteric rather than competitive inhibition. Its function is as follows. Catalyzes the ATP-dependent amination of UTP to CTP with either L-glutamine or ammonia as the source of nitrogen. Regulates intracellular CTP levels through interactions with the four ribonucleotide triphosphates. This is CTP synthase from Bartonella bacilliformis (strain ATCC 35685 / KC583 / Herrer 020/F12,63).